The following is a 227-amino-acid chain: Ribose-5-phosphate isomerase A (227 aa).

Residues 26-29 (TGST), 82-85 (DGAD), and 95-98 (KGGG) contribute to the substrate site. The active-site Proton acceptor is the Glu-104. Lys-122 lines the substrate pocket.

The protein belongs to the ribose 5-phosphate isomerase family. In terms of assembly, homodimer.

The catalysed reaction is aldehydo-D-ribose 5-phosphate = D-ribulose 5-phosphate. It functions in the pathway carbohydrate degradation; pentose phosphate pathway; D-ribose 5-phosphate from D-ribulose 5-phosphate (non-oxidative stage): step 1/1. Its function is as follows. Catalyzes the reversible conversion of ribose-5-phosphate to ribulose 5-phosphate. The protein is Ribose-5-phosphate isomerase A of Streptococcus pneumoniae serotype 4 (strain ATCC BAA-334 / TIGR4).